We begin with the raw amino-acid sequence, 155 residues long: Small ribosomal subunit protein bS6 (155 aa).

A disordered region spans residues 94-155 (EEHETEPSAM…RDDNSDGGQE (62 aa)). Residues 107 to 149 (RGDRGDRGDRRGGDRFGDRDRGDRGDRGSSRFGDRERPRRDDN) show a composition bias toward basic and acidic residues.

This sequence belongs to the bacterial ribosomal protein bS6 family.

Its function is as follows. Binds together with bS18 to 16S ribosomal RNA. This is Small ribosomal subunit protein bS6 from Parvibaculum lavamentivorans (strain DS-1 / DSM 13023 / NCIMB 13966).